Consider the following 164-residue polypeptide: C-phycoerythrin alpha chain (164 aa).

The (2R,3E)-phycoerythrobilin site is built by Cys82 and Cys139.

Belongs to the phycobiliprotein family. Heterodimer of an alpha and a beta chain. In terms of processing, contains two covalently linked bilin chromophores.

It is found in the cellular thylakoid membrane. Its function is as follows. Light-harvesting photosynthetic bile pigment-protein from the phycobiliprotein complex. The chain is C-phycoerythrin alpha chain (cpeA) from Microchaete diplosiphon (Fremyella diplosiphon).